The sequence spans 314 residues: MASASSVSLMLLVAAAMASAASAQLSATFYDTSCPNALSTIKSAVTAAVNSEPRMGASLVRLHFHDCFVQGCDASVLLSGQEQNAGPNAGSLRGFNVVDNIKTQVEAICSQTVSCADILAVAARDSVVALGGPSWTVLLGRRDSTTANESQANTDLPAPSSSLAELIGNFSRKGLDVTDMVALSGAHTIGQAQCQNFRDRLYNETNIDSSFATALKANCPRPTGSGDSNLAPLDTTTPNAFDSAYYTNLLSNKGLLHSDQVLFNGGSTDNTVRNFSSNTAAFNSAFTVAMVKMGNISPLTGTQGQIRLNCSKVN.

The first 23 residues, Met1 to Ala23, serve as a signal peptide directing secretion. Position 24 is a pyrrolidone carboxylic acid (Gln24). Intrachain disulfides connect Cys34–Cys109, Cys67–Cys72, Cys115–Cys310, and Cys194–Cys219. His65 serves as the catalytic Proton acceptor. Asp66, Val69, Gly71, Asp73, and Ser75 together coordinate Ca(2+). The N-linked (GlcNAc...) asparagine glycan is linked to Asn148. Pro157 provides a ligand contact to substrate. A glycan (N-linked (GlcNAc...) asparagine) is linked at Asn169. His187 provides a ligand contact to heme b. Residue Thr188 participates in Ca(2+) binding. Asn203 carries N-linked (GlcNAc...) asparagine glycosylation. The Ca(2+) site is built by Asp234, Thr237, and Asp242. N-linked (GlcNAc...) asparagine glycosylation is found at Asn274 and Asn309.

It belongs to the peroxidase family. Classical plant (class III) peroxidase subfamily. It depends on Ca(2+) as a cofactor. Heme b serves as cofactor.

Its subcellular location is the secreted. The catalysed reaction is 2 a phenolic donor + H2O2 = 2 a phenolic radical donor + 2 H2O. Its function is as follows. Removal of H(2)O(2), oxidation of toxic reductants, biosynthesis and degradation of lignin, suberization, auxin catabolism, response to environmental stresses such as wounding, pathogen attack and oxidative stress. These functions might be dependent on each isozyme/isoform in each plant tissue. The polypeptide is Peroxidase 2 (PRX112) (Oryza sativa subsp. indica (Rice)).